The following is a 441-amino-acid chain: 3-phosphoshikimate 1-carboxyvinyltransferase (441 aa).

Residues Met-1 to Gly-21 form a disordered region. 3-phosphoshikimate-binding residues include Lys-29, Ser-30, and Arg-34. Lys-29 serves as a coordination point for phosphoenolpyruvate. Gly-103 and Arg-132 together coordinate phosphoenolpyruvate. 3-phosphoshikimate is bound by residues Ser-177, Gln-179, Asp-328, and Lys-355. Gln-179 provides a ligand contact to phosphoenolpyruvate. The Proton acceptor role is filled by Asp-328. Residues Arg-359 and Arg-401 each coordinate phosphoenolpyruvate.

The protein belongs to the EPSP synthase family. As to quaternary structure, monomer.

The protein localises to the cytoplasm. The catalysed reaction is 3-phosphoshikimate + phosphoenolpyruvate = 5-O-(1-carboxyvinyl)-3-phosphoshikimate + phosphate. It functions in the pathway metabolic intermediate biosynthesis; chorismate biosynthesis; chorismate from D-erythrose 4-phosphate and phosphoenolpyruvate: step 6/7. Its function is as follows. Catalyzes the transfer of the enolpyruvyl moiety of phosphoenolpyruvate (PEP) to the 5-hydroxyl of shikimate-3-phosphate (S3P) to produce enolpyruvyl shikimate-3-phosphate and inorganic phosphate. This is 3-phosphoshikimate 1-carboxyvinyltransferase from Parasynechococcus marenigrum (strain WH8102).